A 411-amino-acid polypeptide reads, in one-letter code: ATP-dependent Clp protease ATP-binding subunit ClpX (411 aa).

The region spanning 1–49 (MSDKNIRCSFCGRTQKEVKKLIAGPGVYICDECVKLAYDIIEEEDSEEI) is the ClpX-type ZB domain. Zn(2+)-binding residues include cysteine 8, cysteine 11, cysteine 30, and cysteine 33. 115-122 (PTGVGKTL) is a binding site for ATP.

Belongs to the ClpX chaperone family. In terms of assembly, component of the ClpX-ClpP complex. Forms a hexameric ring that, in the presence of ATP, binds to fourteen ClpP subunits assembled into a disk-like structure with a central cavity, resembling the structure of eukaryotic proteasomes.

Functionally, ATP-dependent specificity component of the Clp protease. It directs the protease to specific substrates. Can perform chaperone functions in the absence of ClpP. The sequence is that of ATP-dependent Clp protease ATP-binding subunit ClpX from Dictyoglomus turgidum (strain DSM 6724 / Z-1310).